The primary structure comprises 642 residues: Extracellular metalloproteinase 5 (642 aa).

An N-terminal signal peptide occupies residues 1 to 19 (MHGLLLAAGLLSLPLHVLA). The propeptide occupies 20-246 (HPQPSTTTSL…VHNVVDYVAH (227 aa)). An N-linked (GlcNAc...) asparagine glycan is attached at asparagine 287. Histidine 430 is a Zn(2+) binding site. Glutamate 431 is a catalytic residue. Histidine 434 contacts Zn(2+). Residues asparagine 595 and asparagine 624 are each glycosylated (N-linked (GlcNAc...) asparagine).

This sequence belongs to the peptidase M36 family. Zn(2+) is required as a cofactor.

It is found in the secreted. Secreted metalloproteinase that allows assimilation of proteinaceous substrates and probably acts as a virulence factor. The polypeptide is Extracellular metalloproteinase 5 (MEP5) (Arthroderma gypseum (strain ATCC MYA-4604 / CBS 118893) (Microsporum gypseum)).